Consider the following 240-residue polypeptide: 1-(5-phosphoribosyl)-5-[(5-phosphoribosylamino)methylideneamino] imidazole-4-carboxamide isomerase (240 aa).

Asp8 functions as the Proton acceptor in the catalytic mechanism. Asp129 serves as the catalytic Proton donor.

Belongs to the HisA/HisF family.

The protein localises to the cytoplasm. It catalyses the reaction 1-(5-phospho-beta-D-ribosyl)-5-[(5-phospho-beta-D-ribosylamino)methylideneamino]imidazole-4-carboxamide = 5-[(5-phospho-1-deoxy-D-ribulos-1-ylimino)methylamino]-1-(5-phospho-beta-D-ribosyl)imidazole-4-carboxamide. The protein operates within amino-acid biosynthesis; L-histidine biosynthesis; L-histidine from 5-phospho-alpha-D-ribose 1-diphosphate: step 4/9. This Listeria welshimeri serovar 6b (strain ATCC 35897 / DSM 20650 / CCUG 15529 / CIP 8149 / NCTC 11857 / SLCC 5334 / V8) protein is 1-(5-phosphoribosyl)-5-[(5-phosphoribosylamino)methylideneamino] imidazole-4-carboxamide isomerase.